The chain runs to 197 residues: Dephospho-CoA kinase (197 aa).

Residues 5-197 (RLGLTGSIGM…IAHIRETADA (193 aa)) enclose the DPCK domain. 13-18 (GMGKST) provides a ligand contact to ATP.

It belongs to the CoaE family.

The protein resides in the cytoplasm. It catalyses the reaction 3'-dephospho-CoA + ATP = ADP + CoA + H(+). The protein operates within cofactor biosynthesis; coenzyme A biosynthesis; CoA from (R)-pantothenate: step 5/5. Its function is as follows. Catalyzes the phosphorylation of the 3'-hydroxyl group of dephosphocoenzyme A to form coenzyme A. The polypeptide is Dephospho-CoA kinase (Cereibacter sphaeroides (strain ATCC 17023 / DSM 158 / JCM 6121 / CCUG 31486 / LMG 2827 / NBRC 12203 / NCIMB 8253 / ATH 2.4.1.) (Rhodobacter sphaeroides)).